The following is a 109-amino-acid chain: Nucleoid-associated protein YbaB (109 aa).

Belongs to the YbaB/EbfC family. In terms of assembly, homodimer.

The protein localises to the cytoplasm. It is found in the nucleoid. Functionally, binds to DNA and alters its conformation. May be involved in regulation of gene expression, nucleoid organization and DNA protection. The polypeptide is Nucleoid-associated protein YbaB (Escherichia coli O127:H6 (strain E2348/69 / EPEC)).